The chain runs to 316 residues: Melanocyte-stimulating hormone receptor (316 aa).

At 1–37 (MAVQGSQRRLLGSLNSTPTAIPQLGLAANQTGARCLE) the chain is on the extracellular side. Asparagine 29 is a glycosylation site (N-linked (GlcNAc...) asparagine). A helical membrane pass occupies residues 38–63 (VSIPDGLFLSLGLVSLVENVLVVATI). Over 64–72 (AKNRNLHSP) the chain is Cytoplasmic. Residues 73–93 (MYCFICCLALSDLLVSGSNVV) form a helical membrane-spanning segment. Residues 94–117 (DTLLLLLEAGALAARAAVLQQLDN) lie on the Extracellular side of the membrane. A helical transmembrane segment spans residues 118–139 (VIDVITCSSMLSSLCFLGAIAV). At 140–162 (DRYISIFYALRYRSIVTLPRARR) the chain is on the cytoplasmic side. The chain crosses the membrane as a helical span at residues 163-182 (AVAAIWVASVLFSTLFIAYY). Residues 183 to 190 (DHTAVLLC) are Extracellular-facing. The chain crosses the membrane as a helical span at residues 191–210 (LVVFFLAMLVLMAVLYVHML). The Cytoplasmic portion of the chain corresponds to 211–239 (ARACQHAQGIARLHKRQRPVHKGFGLKGP). A helical membrane pass occupies residues 240–265 (VTLTILLGIFFLCWGPFFLHLTLIVL). At 266–278 (CPEHPTCGCIFKN) the chain is on the extracellular side. The chain crosses the membrane as a helical span at residues 279 to 299 (FNLFLALIICNAIIDPLIYAF). Residues 300–316 (HSQELRRTLKEVLTCSW) are Cytoplasmic-facing. Residue cysteine 314 is the site of S-palmitoyl cysteine attachment.

Belongs to the G-protein coupled receptor 1 family. As to quaternary structure, interacts with MGRN1, but does not undergo MGRN1-mediated ubiquitination; this interaction competes with GNAS-binding and thus inhibits agonist-induced cAMP production. Interacts with OPN3; the interaction results in a decrease in MC1R-mediated cAMP signaling and ultimately a decrease in melanin production in melanocytes.

The protein resides in the cell membrane. Functionally, receptor for MSH (alpha, beta and gamma) and ACTH. The activity of this receptor is mediated by G proteins which activate adenylate cyclase. Mediates melanogenesis, the production of eumelanin (black/brown) and phaeomelanin (red/yellow), via regulation of cAMP signaling in melanocytes. In Gorilla gorilla gorilla (Western lowland gorilla), this protein is Melanocyte-stimulating hormone receptor (MC1R).